Consider the following 615-residue polypeptide: Putative lipase ATG15 (615 aa).

At 1–22 (MKQLGEEHPLISTKRPRAKKRR) the chain is on the cytoplasmic side. A helical; Signal-anchor for type II membrane protein membrane pass occupies residues 23 to 43 (SIAICAAVLTLIAFGFIRFVP). Topologically, residues 44–615 (KDILAGGWYE…NSAAHHVSSI (572 aa)) are lumenal. N-linked (GlcNAc...) asparagine glycosylation is found at asparagine 253, asparagine 276, and asparagine 360. The active-site Charge relay system is the serine 378. Residues 520-559 (NKNDEPPLPNPLHPKPPSTVRSSNMPHEQSPNASRSLSSL) form a disordered region. Over residues 525-536 (PPLPNPLHPKPP) the composition is skewed to pro residues. The segment covering 538–559 (TVRSSNMPHEQSPNASRSLSSL) has biased composition (polar residues). An N-linked (GlcNAc...) asparagine glycan is attached at asparagine 551.

This sequence belongs to the AB hydrolase superfamily. Lipase family. In terms of assembly, binds to both phosphatidylinositol (PI) and phosphatidylinositol 3,5-bisphosphate (PIP2).

It is found in the endosome. It localises to the multivesicular body membrane. The protein localises to the prevacuolar compartment membrane. The catalysed reaction is a triacylglycerol + H2O = a diacylglycerol + a fatty acid + H(+). Functionally, lipase which is essential for lysis of subvacuolar cytoplasm to vacuole targeted bodies and intravacuolar autophagic bodies. Involved in the lysis of intravacuolar multivesicular body (MVB) vesicles. The intravacuolar membrane disintegration by ATG15 is critical to life span extension. This is Putative lipase ATG15 (ATG15) from Debaryomyces hansenii (strain ATCC 36239 / CBS 767 / BCRC 21394 / JCM 1990 / NBRC 0083 / IGC 2968) (Yeast).